The sequence spans 119 residues: Holo-[acyl-carrier-protein] synthase (119 aa).

Mg(2+)-binding residues include Asp7 and Glu53.

This sequence belongs to the P-Pant transferase superfamily. AcpS family. The cofactor is Mg(2+).

Its subcellular location is the cytoplasm. It carries out the reaction apo-[ACP] + CoA = holo-[ACP] + adenosine 3',5'-bisphosphate + H(+). Its function is as follows. Transfers the 4'-phosphopantetheine moiety from coenzyme A to a Ser of acyl-carrier-protein. This Dehalococcoides mccartyi (strain CBDB1) protein is Holo-[acyl-carrier-protein] synthase.